Consider the following 372-residue polypeptide: MAKQYDSVECPFCDEVTKYEKLAKIGQGTFGEVFKAKHRKTGQKVALKKVLMENEKEGFPITALREIKILQLLKHENVVNLIEICRTKASPYNRCKGSIYLVFDFCEHDLAGLLSNVLVKFTLSEIKRVMQMLLNGLYYIHRNKILHRDMKAANVLITRDGVLKLADFGLARAFSLAKNSQPNRYTNRVVTLWYRPPELLLGERDYGPPIDLWGAGCIMAEMWTRSPIMQGNTEQHQLALISQLCGSITPEVWPNVDKYELFEKVELVKGQKRKVKDRLKAYVRDPYALDLIDKLLVLDPAQRIDSDDALNHDFFWSDPMPSDLKGMLSTHLTSMFEYLAPPRRKGSQITQQSTNQSRNPATTNQTEFERVF.

The region spanning Y19–F315 is the Protein kinase domain. I25–V33 is an ATP binding site. K44 is subject to N6-acetyllysine; by EP300/CBP, PCAF/KAT2B and GCN5/KAT2A. ATP is bound by residues K48 and D104–C106. N6-acetyllysine; by PCAF/KAT2B and GCN5/KAT2A is present on K48. The active-site Proton acceptor is the D149. Residues A166–T191 form a T-loop region. Position 167 (D167) interacts with ATP. S175 is modified (phosphoserine). At T186 the chain carries Phosphothreonine; by CaMK1D. The segment at R343–F372 is disordered. A Phosphoserine; by CDK9 and PKA modification is found at S347. Positions S347–T366 are enriched in polar residues. At T350 the chain carries Phosphothreonine; by CDK9. Residue S353 is modified to Phosphoserine; by CDK9. Phosphothreonine; by CDK9 is present on T354. S357 is modified (phosphoserine; by CDK9). Residues T362 and T363 each carry the phosphothreonine; by CDK9 modification.

It belongs to the protein kinase superfamily. CMGC Ser/Thr protein kinase family. CDC2/CDKX subfamily. Component of the super elongation complex (SEC), at least composed of EAF1, EAF2, CDK9, MLLT3/AF9, AFF (AFF1 or AFF4), the P-TEFb complex and ELL (ELL, ELL2 or ELL3). Associates with CCNT1/cyclin-T1, CCNT2/cyclin-T2 (isoform A and isoform B) or CCNK/cyclin-K to form active P-TEFb. P-TEFb forms a complex with AFF4/AF5Q31 and is part of the super elongation complex (SEC). Component of a complex which is composed of at least 5 members: HTATSF1/Tat-SF1, P-TEFb complex, RNA pol II, SUPT5H, and NCL/nucleolin. Associates with UBR5 and forms a transcription regulatory complex composed of CDK9, RNAP II, UBR5 and TFIIS/TCEA1 that can stimulate target gene transcription (e.g. gamma fibrinogen/FGG) by recruiting their promoters. Component of the 7SK snRNP inactive complex which is composed of at least 8 members: P-TEFb (composed of CDK9 and CCNT1/cyclin-T1), HEXIM1, HEXIM2, LARP7, BCDIN3, SART3 proteins and 7SK and U6 snRNAs. This inactive 7SK snRNP complex can also interact with NCOR1 and HDAC3, probably to regulate CDK9 acetylation. Release of P-TEFb from P-TEFb/7SK snRNP complex requires both PP2B to transduce calcium Ca(2+) signaling in response to stimuli (e.g. UV or hexamethylene bisacetamide (HMBA)), and PPP1CA to dephosphorylate Thr-186. This released P-TEFb remains inactive in the pre-initiation complex with BRD4 until new Thr-186 phosphorylation occurs after the synthesis of a short RNA. Interacts with BRD4; to target chromatin binding. Interacts with JMJD6. Interacts with activated nuclear STAT3 and RELA/p65. Binds to AR and MYOD1. Forms a complex composed of CDK9, CCNT1/cyclin-T1, EP300 and GATA4 that stimulates hypertrophy in cardiomyocytes. The large PER complex involved in the repression of transcriptional termination is composed of at least PER2, CDK9, DDX5, DHX9, NCBP1 and POLR2A. Interacts with HSF1. Interacts with TBX21. Interacts with WDR43. Interacts with ZMYND8; the association appears to occur between homodimeric ZMYND8 and the activated form of the P-TEFb complex. Post-translationally, autophosphorylation at Thr-186, Ser-347, Thr-350, Ser-353, Thr-354 and Ser-357 triggers kinase activity by promoting cyclin and substrate binding upon conformational changes. Thr-186 phosphorylation requires the calcium Ca(2+) signaling pathway, including CaMK1D and calmodulin. This inhibition is relieved by Thr-29 dephosphorylation. Phosphorylation at Ser-175 inhibits kinase activity. Can be phosphorylated on either Thr-362 or Thr-363 but not on both simultaneously. Dephosphorylation of Thr-186 by PPM1A and PPM1B blocks CDK9 activity and may lead to CDK9 proteasomal degradation. However, PPP1CA-mediated Thr-186 dephosphorylation is required to release P-TEFb from its inactive P-TEFb/7SK snRNP complex. Dephosphorylated at Ser-347 by the PNUTS-PP1 complex during RNA polymerase II transcription pause-release. Dephosphorylation of C-terminus Thr and Ser residues by protein phosphatase-1 (PP1) triggers CDK9 activity. In terms of processing, N6-acetylation of Lys-44 promotes kinase activity, whereas acetylation of both Lys-44 and Lys-48 mediated by PCAF/KAT2B and GCN5/KAT2A reduces kinase activity. The acetylated form associates with PML bodies in the nuclear matrix and with the transcriptionally silent HIV-1 genome; deacetylated upon transcription stimulation. Deacetylated by SIRT7, promoting the kinase activity and subsequent 'Ser-2' phosphorylation of the C-terminal domain (CTD) of RNA polymerase II. Post-translationally, polyubiquitinated and thus activated by UBR5. This ubiquitination is promoted by TFIIS/TCEA1 and favors 'Ser-2' phosphorylation of RPB1/POLR2A CTD.

It localises to the nucleus. Its subcellular location is the cytoplasm. The protein resides in the PML body. The catalysed reaction is L-seryl-[protein] + ATP = O-phospho-L-seryl-[protein] + ADP + H(+). The enzyme catalyses L-threonyl-[protein] + ATP = O-phospho-L-threonyl-[protein] + ADP + H(+). It catalyses the reaction [DNA-directed RNA polymerase] + ATP = phospho-[DNA-directed RNA polymerase] + ADP + H(+). Its activity is regulated as follows. Activation by Thr-186 phosphorylation is calcium Ca(2+) signaling pathway-dependent; actively inactivated by dephosphorylation mediated by PPP1CA, PPM1A and PPM1B. Reversibly repressed by acetylation at Lys-44 and Lys-48. Its function is as follows. Protein kinase involved in the regulation of transcription. Member of the cyclin-dependent kinase pair (CDK9/cyclin-T) complex, also called positive transcription elongation factor b (P-TEFb), which facilitates the transition from abortive to productive elongation by phosphorylating the CTD (C-terminal domain) of the large subunit of RNA polymerase II (RNAP II) POLR2A, SUPT5H and RDBP. This complex is inactive when in the 7SK snRNP complex form. Phosphorylates EP300, MYOD1, RPB1/POLR2A and AR and the negative elongation factors DSIF and NELFE. Regulates cytokine inducible transcription networks by facilitating promoter recognition of target transcription factors (e.g. TNF-inducible RELA/p65 activation and IL-6-inducible STAT3 signaling). Promotes RNA synthesis in genetic programs for cell growth, differentiation and viral pathogenesis. P-TEFb is also involved in cotranscriptional histone modification, mRNA processing and mRNA export. Modulates a complex network of chromatin modifications including histone H2B monoubiquitination (H2Bub1), H3 lysine 4 trimethylation (H3K4me3) and H3K36me3; integrates phosphorylation during transcription with chromatin modifications to control co-transcriptional histone mRNA processing. The CDK9/cyclin-K complex has also a kinase activity towards CTD of RNAP II and can substitute for CDK9/cyclin-T P-TEFb in vitro. Replication stress response protein; the CDK9/cyclin-K complex is required for genome integrity maintenance, by promoting cell cycle recovery from replication arrest and limiting single-stranded DNA amount in response to replication stress, thus reducing the breakdown of stalled replication forks and avoiding DNA damage. In addition, probable function in DNA repair of isoform 2 via interaction with KU70/XRCC6. Promotes cardiac myocyte enlargement. RPB1/POLR2A phosphorylation on 'Ser-2' in CTD activates transcription. AR phosphorylation modulates AR transcription factor promoter selectivity and cell growth. DSIF and NELF phosphorylation promotes transcription by inhibiting their negative effect. The phosphorylation of MYOD1 enhances its transcriptional activity and thus promotes muscle differentiation. Catalyzes phosphorylation of KAT5, promoting KAT5 recruitment to chromatin and histone acetyltransferase activity. The sequence is that of Cyclin-dependent kinase 9 (CDK9) from Bos taurus (Bovine).